The primary structure comprises 122 residues: Neutral phospholipase A2 agkistrodotoxin (122 aa).

Cystine bridges form between Cys26/Cys115, Cys28/Cys44, Cys43/Cys95, Cys49/Cys122, Cys50/Cys88, Cys57/Cys81, and Cys75/Cys86. Tyr27, Gly29, and Gly31 together coordinate Ca(2+). The active site involves His47. Asp48 is a binding site for Ca(2+). Asp89 is a catalytic residue.

Requires Ca(2+) as cofactor. Expressed by the venom gland.

The protein localises to the secreted. The catalysed reaction is a 1,2-diacyl-sn-glycero-3-phosphocholine + H2O = a 1-acyl-sn-glycero-3-phosphocholine + a fatty acid + H(+). Its function is as follows. Snake venom phospholipase A2 (PLA2) that inhibits neuromuscular transmission by blocking acetylcholine release from the nerve termini. PLA2 catalyzes the calcium-dependent hydrolysis of the 2-acyl groups in 3-sn-phosphoglycerides. This is Neutral phospholipase A2 agkistrodotoxin from Gloydius halys (Chinese water mocassin).